The sequence spans 176 residues: MLQLTTYRNLQVFLVIMTAIGMSFALFFLQRYMGFSPCPLCIFQRIGLMIMGGFALIAALFHPKSMVIRLLLWLGSLAGIGWAAIVAGRHVWLQHLPADQVPSCGPGLDYWLDTLPMQQVLKEVFAGSGECASIDWTFLGLSIPEQSLILFSILILTHLLILWRIVRPATPKPLAR.

Over 1-11 (MLQLTTYRNLQ) the chain is Cytoplasmic. A helical transmembrane segment spans residues 12 to 28 (VFLVIMTAIGMSFALFF). The Periplasmic segment spans residues 29–46 (LQRYMGFSPCPLCIFQRI). Residues Cys-38 and Cys-41 are joined by a disulfide bond. The chain crosses the membrane as a helical span at residues 47-63 (GLMIMGGFALIAALFHP). Topologically, residues 64-70 (KSMVIRL) are cytoplasmic. The chain crosses the membrane as a helical span at residues 71–88 (LLWLGSLAGIGWAAIVAG). Topologically, residues 89-145 (RHVWLQHLPADQVPSCGPGLDYWLDTLPMQQVLKEVFAGSGECASIDWTFLGLSIPE) are periplasmic. A disulfide bridge connects residues Cys-104 and Cys-131. A helical membrane pass occupies residues 146 to 164 (QSLILFSILILTHLLILWR). Residues 165–176 (IVRPATPKPLAR) are Cytoplasmic-facing.

This sequence belongs to the DsbB family.

It is found in the cell inner membrane. Required for disulfide bond formation in some periplasmic proteins. Acts by oxidizing the DsbA protein. The chain is Disulfide bond formation protein B from Psychrobacter cryohalolentis (strain ATCC BAA-1226 / DSM 17306 / VKM B-2378 / K5).